A 291-amino-acid polypeptide reads, in one-letter code: Membrane protein insertase YidC (291 aa).

A signal peptide spans 1–19 (MKKKALLPLLLGVMVFLAG). A lipid anchor (N-palmitoyl cysteine) is attached at Cys-20. Cys-20 carries S-diacylglycerol cysteine lipidation. 4 helical membrane-spanning segments follow: residues 56–76 (YGIA…PFML), 134–154 (ALGC…YFVL), 170–190 (WFNL…LYFI), and 211–231 (MIVS…ALGL). The disordered stretch occupies residues 266–291 (FKENNSNSNKKGKNTQVVSKNNKKKK).

This sequence belongs to the OXA1/ALB3/YidC family. Type 2 subfamily.

Its subcellular location is the cell membrane. Its function is as follows. Required for the insertion and/or proper folding and/or complex formation of integral membrane proteins into the membrane. Involved in integration of membrane proteins that insert both dependently and independently of the Sec translocase complex, as well as at least some lipoproteins. This Staphylococcus haemolyticus (strain JCSC1435) protein is Membrane protein insertase YidC.